We begin with the raw amino-acid sequence, 766 residues long: Polyribonucleotide nucleotidyltransferase (766 aa).

Mg(2+) is bound by residues D490 and D496. One can recognise a KH domain in the interval 557–616; the sequence is PKIDTITIPVDKIKVVIGKGGEQIDKIIAETGVKIDIDDEGLCSIFSSDQSAIDRAKEII. The S1 motif domain occupies 626 to 694; sequence GEVYEAKVVR…DKGRVDASMR (69 aa). Composition is skewed to basic and acidic residues over residues 700 to 734 and 744 to 766; these read PEGYVEPERKPRERRDNKDRRNGNGFDRRNNDRNN and FELRERKSHVDHEFPELSTKKPE. The segment at 700 to 766 is disordered; sequence PEGYVEPERK…FPELSTKKPE (67 aa).

This sequence belongs to the polyribonucleotide nucleotidyltransferase family. The cofactor is Mg(2+).

The protein resides in the cytoplasm. The enzyme catalyses RNA(n+1) + phosphate = RNA(n) + a ribonucleoside 5'-diphosphate. Its function is as follows. Involved in mRNA degradation. Catalyzes the phosphorolysis of single-stranded polyribonucleotides processively in the 3'- to 5'-direction. In Lactococcus lactis subsp. cremoris (strain MG1363), this protein is Polyribonucleotide nucleotidyltransferase.